Here is a 356-residue protein sequence, read N- to C-terminus: Icosanoyl-CoA 5-desaturase (356 aa).

Residues 5-25 (LYFPISISLSLSLEAMASFIA) traverse the membrane as a helical segment. The interval 38-58 (LDPKIPTKPEPKTETPKPKDD) is disordered. The segment covering 42–58 (IPTKPEPKTETPKPKDD) has biased composition (basic and acidic residues). The next 2 membrane-spanning stretches (helical) occupy residues 88–108 (NAVT…YFSW) and 111–131 (FWIS…TLCF). Residues 132-137 (HRCLTH) carry the Histidine box-1 motif. The Histidine box-2 signature appears at 169-173 (HRYHH). Residues 236–256 (ALIALLYYVGGFPYIVWGMGF) form a helical membrane-spanning segment. Residues 302-306 (HNNHH) carry the Histidine box-3 motif.

Belongs to the fatty acid desaturase type 1 family. Fe(2+) serves as cofactor.

It localises to the membrane. It carries out the reaction eicosanoyl-CoA + 2 Fe(II)-[cytochrome b5] + O2 + 2 H(+) = (5Z)-eicosenoyl-CoA + 2 Fe(III)-[cytochrome b5] + 2 H2O. The protein operates within lipid metabolism; monounsaturated fatty acid biosynthesis. Functionally, desaturase involved in the biosynthesis of (5Z)-icos-5-enoate, an unusual monounsaturated fatty acid that makes up to 60% of the total fatty acids in Limnanthes sp. seed oil. Only acts on saturated fatty acids. In Limnanthes douglasii (Douglas' meadowfoam), this protein is Icosanoyl-CoA 5-desaturase.